A 539-amino-acid chain; its full sequence is MNSPRSNAVNGGSGGAISALPSTLAQLALRDKQQAASASASSATNGSSGSESLVGVGGRPPNQPPSVPVAASGKLDTSGGGASNGDSNKLTHDLQEKEHQQAQKPQKPPLPVRQKPMEIAGYVGFANLPNQVYRKAVKRGFEFTLMVVGASGLGKSTLINSMFLSDIYNAEQYPGPSLRKKKTVAVEATKVMLKENGVNLTLTVVDTPGFGDAVDNSNCWVPILEYVDSKYEEYLTAESRVYRKTISDSRVHCCLYFIAPSGHGLLPLDIACMQSLSDKVNLVPVIAKADTMTPDEVHLFKKQILNEIAQHKIKIYDFPATLEDAAEEAKTTQNLRSRVPFAVVGANTIIEQDGKKVRGRRYPWGLVEVENLTHCDFIALRNMVIRTHLQDLKDVTNNVHYENYRCRKLSELGLVDGKARLSNKNPLTQMEEEKREHEQKMKKMEAEMEQVFDMKVKEKMQKLRDSELELARRHEERKKALELQIRELEEKRREFEREKKEWEDVNHVTLEELKRRSLGANSSTDNVDGKKEKKKKGLF.

Phosphoserine occurs at positions 6 and 13. The disordered stretch occupies residues 29-90 (LRDKQQAASA…GASNGDSNKL (62 aa)). Positions 35–54 (AASASASSATNGSSGSESLV) are enriched in low complexity. A Septin-type G domain is found at 139–411 (RGFEFTLMVV…ENYRCRKLSE (273 aa)). The G1 motif stretch occupies residues 149–156 (GASGLGKS). Residues 149 to 156 (GASGLGKS), T183, G209, 288 to 296 (KADTMTPDE), G345, and R360 each bind GTP. A G3 motif region spans residues 206–209 (DTPG). Residues 287–290 (AKAD) form a G4 motif region. A coiled-coil region spans residues 420-516 (RLSNKNPLTQ…HVTLEELKRR (97 aa)). The tract at residues 513 to 539 (LKRRSLGANSSTDNVDGKKEKKKKGLF) is disordered. At S517 the chain carries Phosphoserine.

This sequence belongs to the TRAFAC class TrmE-Era-EngA-EngB-Septin-like GTPase superfamily. Septin GTPase family. Likely part of a multicomponent septin complex that includes Septin1. Interacts with Septin1. Interacts with hil. Interacts with park. Ubiquitinated by park, leading to its degradation by the proteasome. Accumulates at the leading edge of the cleavage furrow in dividing cells and cellularizing embryos (at protein level).

The protein resides in the apical cell membrane. Its subcellular location is the cleavage furrow. The protein localises to the cytoplasm. It is found in the cell cortex. Involved in cytokinesis and possibly cellularization. Also acts as an enhancer of the sina gene, thus having a role in photoreceptor development. May be involved in p53-dependent apoptosis. This chain is Protein peanut (pnut), found in Drosophila melanogaster (Fruit fly).